The sequence spans 492 residues: N-succinylglutamate 5-semialdehyde dehydrogenase (492 aa).

Residue 220–225 (GSANTG) coordinates NAD(+). Catalysis depends on residues glutamate 243 and cysteine 277.

Belongs to the aldehyde dehydrogenase family. AstD subfamily.

The enzyme catalyses N-succinyl-L-glutamate 5-semialdehyde + NAD(+) + H2O = N-succinyl-L-glutamate + NADH + 2 H(+). Its pathway is amino-acid degradation; L-arginine degradation via AST pathway; L-glutamate and succinate from L-arginine: step 4/5. Catalyzes the NAD-dependent reduction of succinylglutamate semialdehyde into succinylglutamate. The sequence is that of N-succinylglutamate 5-semialdehyde dehydrogenase from Escherichia coli (strain K12 / MC4100 / BW2952).